A 125-amino-acid polypeptide reads, in one-letter code: Small ribosomal subunit protein uS13 (125 aa).

The segment at Q90 to K125 is disordered.

The protein belongs to the universal ribosomal protein uS13 family. As to quaternary structure, part of the 30S ribosomal subunit. Forms a loose heterodimer with protein S19. Forms two bridges to the 50S subunit in the 70S ribosome.

Located at the top of the head of the 30S subunit, it contacts several helices of the 16S rRNA. In the 70S ribosome it contacts the 23S rRNA (bridge B1a) and protein L5 of the 50S subunit (bridge B1b), connecting the 2 subunits; these bridges are implicated in subunit movement. Contacts the tRNAs in the A and P-sites. The protein is Small ribosomal subunit protein uS13 of Bifidobacterium adolescentis (strain ATCC 15703 / DSM 20083 / NCTC 11814 / E194a).